The primary structure comprises 298 residues: GTP cyclohydrolase FolE2 (298 aa).

This sequence belongs to the GTP cyclohydrolase IV family.

It carries out the reaction GTP + H2O = 7,8-dihydroneopterin 3'-triphosphate + formate + H(+). The protein operates within cofactor biosynthesis; 7,8-dihydroneopterin triphosphate biosynthesis; 7,8-dihydroneopterin triphosphate from GTP: step 1/1. Converts GTP to 7,8-dihydroneopterin triphosphate. This is GTP cyclohydrolase FolE2 from Neisseria meningitidis serogroup A / serotype 4A (strain DSM 15465 / Z2491).